The sequence spans 253 residues: Geranylgeranylglyceryl phosphate synthase (253 aa).

Mg(2+) contacts are provided by D23 and S52. Sn-glycerol 1-phosphate-binding positions include 171 to 177, 202 to 203, and 224 to 225; these read YFEAGSG, GG, and GT.

It belongs to the GGGP/HepGP synthase family. Group II subfamily. As to quaternary structure, homodimer. Requires Mg(2+) as cofactor.

It localises to the cytoplasm. It carries out the reaction sn-glycerol 1-phosphate + (2E,6E,10E)-geranylgeranyl diphosphate = sn-3-O-(geranylgeranyl)glycerol 1-phosphate + diphosphate. It participates in membrane lipid metabolism; glycerophospholipid metabolism. Inhibited by high concentrations of magnesium (&gt;10 mM) and by EDTA in vitro. In terms of biological role, prenyltransferase that catalyzes the transfer of the geranylgeranyl moiety of geranylgeranyl diphosphate (GGPP) to the C3 hydroxyl of sn-glycerol-1-phosphate (G1P). This reaction is the first ether-bond-formation step in the biosynthesis of archaeal membrane lipids. Cannot use sn-glycerol-3-phosphate (G3P) as substrate. The polypeptide is Geranylgeranylglyceryl phosphate synthase (Thermoplasma acidophilum (strain ATCC 25905 / DSM 1728 / JCM 9062 / NBRC 15155 / AMRC-C165)).